Consider the following 218-residue polypeptide: Charged multivesicular body protein 6 (218 aa).

2 coiled-coil regions span residues 15–42 (EDKISKTDRAVLNLKIQRDKLKNYQTQV) and 70–172 (QEKM…AQQY).

The protein belongs to the SNF7 family. As to quaternary structure, probable core component of the endosomal sorting required for transport complex III (ESCRT-III).

It localises to the endosome membrane. Probable core component of the endosomal sorting required for transport complex III (ESCRT-III) which is involved in multivesicular bodies (MVBs) formation and sorting of endosomal cargo proteins into MVBs. MVBs contain intraluminal vesicles (ILVs) that are generated by invagination and scission from the limiting membrane of the endosome and are delivered to lysosomes enabling degradation of membrane proteins. This Dictyostelium discoideum (Social amoeba) protein is Charged multivesicular body protein 6 (chmp6).